The primary structure comprises 142 residues: Hemoglobin subunit alpha-2 (142 aa).

The Globin domain occupies 2 to 142 (VLSPADKTNV…VSTVLTSKYR (141 aa)). His59 provides a ligand contact to O2. Heme b is bound at residue His88.

The protein belongs to the globin family. In terms of assembly, heterotetramer of two alpha chains and two beta chains. Red blood cells.

In terms of biological role, involved in oxygen transport from the lung to the various peripheral tissues. Hemopressin acts as an antagonist peptide of the cannabinoid receptor CNR1. Hemopressin-binding efficiently blocks cannabinoid receptor CNR1 and subsequent signaling. This is Hemoglobin subunit alpha-2 (HBA2) from Hylobates lar (Lar gibbon).